The primary structure comprises 376 residues: Putative glutamate--cysteine ligase 2-1 (376 aa).

This sequence belongs to the glutamate--cysteine ligase type 2 family. YbdK subfamily.

The enzyme catalyses L-cysteine + L-glutamate + ATP = gamma-L-glutamyl-L-cysteine + ADP + phosphate + H(+). In terms of biological role, ATP-dependent carboxylate-amine ligase which exhibits weak glutamate--cysteine ligase activity. This Mycobacterium sp. (strain JLS) protein is Putative glutamate--cysteine ligase 2-1.